Reading from the N-terminus, the 484-residue chain is tRNA sulfurtransferase (484 aa).

Positions 61–165 constitute a THUMP domain; it reads TLLVELLGRI…NDKMMLIKAR (105 aa). Residues 183–184, Lys-265, Gly-287, and Gln-296 contribute to the ATP site; that span reads LI. The cysteines at positions 344 and 456 are disulfide-linked. In terms of domain architecture, Rhodanese spans 404–484; it reads LSANEVILDI…DNVKVLNKIS (81 aa). Catalysis depends on Cys-456, which acts as the Cysteine persulfide intermediate.

The protein belongs to the ThiI family.

The protein resides in the cytoplasm. It catalyses the reaction [ThiI sulfur-carrier protein]-S-sulfanyl-L-cysteine + a uridine in tRNA + 2 reduced [2Fe-2S]-[ferredoxin] + ATP + H(+) = [ThiI sulfur-carrier protein]-L-cysteine + a 4-thiouridine in tRNA + 2 oxidized [2Fe-2S]-[ferredoxin] + AMP + diphosphate. The catalysed reaction is [ThiS sulfur-carrier protein]-C-terminal Gly-Gly-AMP + S-sulfanyl-L-cysteinyl-[cysteine desulfurase] + AH2 = [ThiS sulfur-carrier protein]-C-terminal-Gly-aminoethanethioate + L-cysteinyl-[cysteine desulfurase] + A + AMP + 2 H(+). It participates in cofactor biosynthesis; thiamine diphosphate biosynthesis. Its function is as follows. Catalyzes the ATP-dependent transfer of a sulfur to tRNA to produce 4-thiouridine in position 8 of tRNAs, which functions as a near-UV photosensor. Also catalyzes the transfer of sulfur to the sulfur carrier protein ThiS, forming ThiS-thiocarboxylate. This is a step in the synthesis of thiazole, in the thiamine biosynthesis pathway. The sulfur is donated as persulfide by IscS. The polypeptide is tRNA sulfurtransferase (Histophilus somni (strain 2336) (Haemophilus somnus)).